The following is a 216-amino-acid chain: Somatotropin (216 aa).

Residues 1 to 26 (MAAGSWTAGLLAFALLCLPWPQEASA) form the signal peptide. H45 contacts Zn(2+). A disulfide bond links C78 and C189. S131 carries the phosphoserine modification. E198 contributes to the Zn(2+) binding site. C206 and C214 form a disulfide bridge.

Belongs to the somatotropin/prolactin family.

It is found in the secreted. Functionally, plays an important role in growth control. Its major role in stimulating body growth is to stimulate the liver and other tissues to secrete IGF1. It stimulates both the differentiation and proliferation of myoblasts. It also stimulates amino acid uptake and protein synthesis in muscle and other tissues. In Oryctolagus cuniculus (Rabbit), this protein is Somatotropin (GH1).